The chain runs to 525 residues: Tigger transposable element-derived protein 2 (525 aa).

One can recognise an HTH psq-type domain in the interval 1–52 (MLGKRKRVVLTIKDKLDIIKKLEEGISFKKLSVVYGIGESTVRDIKKNKERI). 2 consecutive DNA-binding regions (H-T-H motif) follow at residues 28–48 (FKKL…IKKN) and 100–132 (TICA…FKQR). Residues 67 to 139 (KRKSMKSSTY…KQRHGIPKAA (73 aa)) enclose the HTH CENPB-type domain. Residues 168-385 (LQPEQIYGAD…VKSSTITKAW (218 aa)) enclose the DDE-1 domain. A disordered region spans residues 442 to 474 (QVLTDSESAEDQTKAAEQKPSSKSRKTELNPEK).

The protein belongs to the tigger transposable element derived protein family.

It localises to the nucleus. The polypeptide is Tigger transposable element-derived protein 2 (TIGD2) (Homo sapiens (Human)).